Here is an 86-residue protein sequence, read N- to C-terminus: Large ribosomal subunit protein bL31B (86 aa).

It belongs to the bacterial ribosomal protein bL31 family. Type B subfamily. Part of the 50S ribosomal subunit.

This is Large ribosomal subunit protein bL31B from Citrobacter koseri (strain ATCC BAA-895 / CDC 4225-83 / SGSC4696).